The sequence spans 183 residues: Acidic proline-rich protein HP43A (183 aa).

Residues 1-14 form the signal peptide; the sequence is MLVVLLTAALLAEH. A disordered region spans residues 22–183; the sequence is ISQLSEEEQQ…QGSEEQSTSL (162 aa). Over residues 52–65 the composition is skewed to acidic residues; it reads SDEEGDDDGEEDGN. 5 tandem repeats follow at residues 81–100, 101–120, 121–140, 141–160, and 161–180. Residues 86-183 show a composition bias toward low complexity; sequence GNQQGPPQQE…QGSEEQSTSL (98 aa).

Its subcellular location is the secreted. The protein is Acidic proline-rich protein HP43A (H29) of Mesocricetus auratus (Golden hamster).